A 251-amino-acid polypeptide reads, in one-letter code: Flap endonuclease Xni (251 aa).

D104 provides a ligand contact to Mg(2+). Positions 160–249 (VQPQQLPDYW…IDGNLQQLRL (90 aa)) constitute a 5'-3' exonuclease domain. Residues L171, A172, P180, V182, and I185 each contribute to the K(+) site. The segment at 184-189 (GIGPKS) is interaction with DNA.

Belongs to the Xni family. It depends on Mg(2+) as a cofactor. K(+) is required as a cofactor.

Has flap endonuclease activity. During DNA replication, flap endonucleases cleave the 5'-overhanging flap structure that is generated by displacement synthesis when DNA polymerase encounters the 5'-end of a downstream Okazaki fragment. In Shigella flexneri serotype 5b (strain 8401), this protein is Flap endonuclease Xni.